We begin with the raw amino-acid sequence, 501 residues long: uncharacterized protein (501 aa).

This sequence belongs to the UbiD family.

This is an uncharacterized protein from Synechocystis sp. (strain ATCC 27184 / PCC 6803 / Kazusa).